The chain runs to 459 residues: Jacalin-related lectin 12 (459 aa).

Jacalin-type lectin domains lie at 2-148 (SQDS…YFTP), 151-296 (PTRM…YITT), and 298-443 (TLTK…YSFP).

It belongs to the jacalin lectin family.

This chain is Jacalin-related lectin 12 (JAL12), found in Arabidopsis thaliana (Mouse-ear cress).